We begin with the raw amino-acid sequence, 426 residues long: Glutamate-1-semialdehyde 2,1-aminomutase (426 aa).

Lys265 carries the N6-(pyridoxal phosphate)lysine modification.

This sequence belongs to the class-III pyridoxal-phosphate-dependent aminotransferase family. HemL subfamily. As to quaternary structure, homodimer. Requires pyridoxal 5'-phosphate as cofactor.

The protein resides in the cytoplasm. The catalysed reaction is (S)-4-amino-5-oxopentanoate = 5-aminolevulinate. Its pathway is porphyrin-containing compound metabolism; protoporphyrin-IX biosynthesis; 5-aminolevulinate from L-glutamyl-tRNA(Glu): step 2/2. This Yersinia enterocolitica serotype O:8 / biotype 1B (strain NCTC 13174 / 8081) protein is Glutamate-1-semialdehyde 2,1-aminomutase.